Reading from the N-terminus, the 2313-residue chain is Voltage-dependent R-type calcium channel subunit alpha-1E (2313 aa).

Residues 1 to 38 (MARFGEAVVARPGSGDGDSDQSRNRQGTPVPASGQAAA) form a disordered region. The Cytoplasmic segment spans residues 1-89 (MARFGEAVVA…KYAKKLIDWP (89 aa)). Phosphoserine occurs at positions 14 and 19. An I repeat occupies 76 to 354 (NIVRKYAKKL…LVLGVLSGEF (279 aa)). A helical membrane pass occupies residues 90-108 (PFEYMILATIIANCIVLAL). Over 109–127 (EQHLPEDDKTPMSRRLEKT) the chain is Extracellular. A helical membrane pass occupies residues 128–146 (EPYFIGIFCFEAGIKIVAL). Over 147 to 158 (GFIFHKGSYLRN) the chain is Cytoplasmic. The chain crosses the membrane as a helical span at residues 159-173 (GWNVMDFIVVLSGIL). Over 174–185 (ATAGTHFNTHVD) the chain is Extracellular. The chain crosses the membrane as a helical span at residues 186–205 (LRTLRAVRVLRPLKLVSGIP). Residues 206 to 223 (SLQIVLKSIMKAMVPLLQ) lie on the Cytoplasmic side of the membrane. The helical transmembrane segment at 224 to 244 (IGLLLFFAILMFAIIGLEFYS) threads the bilayer. Over 245-326 (GKLHRACFMN…NTNDALGATW (82 aa)) the chain is Extracellular. The N-linked (GlcNAc...) asparagine glycan is linked to Asn-254. Residues 327 to 350 (NWLYFIPLIIIGSFFVLNLVLGVL) form a helical membrane-spanning segment. The Cytoplasmic segment spans residues 351–476 (SGEFAKERER…ISIRHMVKSQ (126 aa)). Residues 374–391 (QQIERELNGYRAWIDKAE) form a binding to the beta subunit region. Asp-426 is a binding site for Ca(2+). Phosphoserine is present on Ser-427. Ser-428, Glu-430, and Cys-432 together coordinate Ca(2+). At Thr-440 the chain carries Phosphothreonine. The II repeat unit spans residues 462–706 (ERLLRISIRH…VFLAIAVDNL (245 aa)). A helical transmembrane segment spans residues 477-496 (VFYWIVLSLVALNTACVAIV). Residues 497 to 509 (HHNQPQWLTHLLY) are Extracellular-facing. The chain crosses the membrane as a helical span at residues 510 to 529 (YAEFLFLGLFLLEMSLKMYG). At 530–538 (MGPRLYFHS) the chain is on the cytoplasmic side. Residues 539-557 (SFNCFDFGVTVGSIFEVVW) form a helical membrane-spanning segment. Over 558–567 (AIFRPGTSFG) the chain is Extracellular. Residues 568–586 (ISVLRALRLLRIFKITKYW) form a helical membrane-spanning segment. The Cytoplasmic segment spans residues 587–605 (ASLRNLVVSLMSSMKSIIS). A helical membrane pass occupies residues 606–625 (LLFLLFLFIVVFALLGMQLF). Residues 626–678 (GGRFNFNDGTPSANFDTFPAAIMTVFQILTGEDWNEVMYNGIRSQGGVSSGMW) lie on the Extracellular side of the membrane. A helical transmembrane segment spans residues 679-703 (SAIYFIVLTLFGNYTLLNVFLAIAV). Residues 704–1148 (DNLANAQELT…TNPIRRACHY (445 aa)) are Cytoplasmic-facing. Residues 729–774 (LQKAKEVSPMSAPNMPSIERDRRRRHHMSMWEPRSSHLRERRRRHH) form a disordered region. Residues Ser-736, Ser-745, Ser-793, Ser-815, and Ser-855 each carry the phosphoserine modification. A disordered region spans residues 851–984 (SRGGSLKGDG…EERAQDLRRT (134 aa)). Residues 866 to 875 (ALDNQRTPLS) are compositionally biased toward polar residues. The span at 913–926 (RHRQSQRRSRHRRV) shows a compositional bias: basic residues. The span at 933 to 945 (SSSASRSRSASQE) shows a compositional bias: low complexity. Ser-947 carries the phosphoserine modification. Residues 955–983 (EGEKDHELRGNHGAKEPTIQEERAQDLRR) show a composition bias toward basic and acidic residues. Ser-1097 is subject to Phosphoserine. The disordered stretch occupies residues 1103-1125 (EIREDEEEVEKKKQKKEKRETGK). Residues 1140–1426 (NPIRRACHYI…IFVALIIITF (287 aa)) form an III repeat. Residues 1149–1165 (IVNLRYFEMCILLVIAA) form a helical membrane-spanning segment. Over 1166–1189 (SSIALAAEDPVLTNSERNKVLRYF) the chain is Extracellular. A helical transmembrane segment spans residues 1190-1209 (DYVFTGVFTFEMVIKMIDQG). Residues 1210–1217 (LILQDGSY) lie on the Cytoplasmic side of the membrane. A helical membrane pass occupies residues 1218-1240 (FRDLWNILDFVVVVGALVAFALA). The Extracellular portion of the chain corresponds to 1241 to 1254 (NALGTNKGRDIKTI). A helical membrane pass occupies residues 1255 to 1272 (KSLRVLRVLRPLKTIKRL). Residues 1273-1291 (PKLKAVFDCVVTSLKNVFN) are Cytoplasmic-facing. The helical transmembrane segment at 1292–1311 (ILIVYKLFMFIFAVIAVQLF) threads the bilayer. Topologically, residues 1312-1398 (KGKFFYCTDS…RGPSRSNRME (87 aa)) are extracellular. A helical membrane pass occupies residues 1399–1422 (MSIFYVVYFVVFPFFFVNIFVALI). Residues 1423–1479 (IITFQEQGDKMMEECSLEKNERACIDFAISAKPLTRYMPQNRHTFQYRVWHFVVSPS) lie on the Cytoplasmic side of the membrane. The IV repeat unit spans residues 1463-1726 (NRHTFQYRVW…LFVAVIMDNF (264 aa)). A helical transmembrane segment spans residues 1480–1498 (FEYTIMAMIALNTVVLMMK). Residues 1499–1513 (YYSAPCTYELALKYL) are Extracellular-facing. A helical membrane pass occupies residues 1514–1533 (NIAFTMVFSLECVLKVIAFG). Topologically, residues 1534–1541 (FLNYFRDT) are cytoplasmic. A helical transmembrane segment spans residues 1542-1560 (WNIFDFITVIGSITEIILT). Over 1561–1571 (DSKLVNTSGFN) the chain is Extracellular. Residues Asn-1566 and Asn-1571 are each glycosylated (N-linked (GlcNAc...) asparagine). The helical transmembrane segment at 1572-1590 (MSFLKLFRAARLIKLLRQG) threads the bilayer. Over 1591-1609 (YTIRILLWTFVQSFKALPY) the chain is Cytoplasmic. Residues 1610–1629 (VCLLIAMLFFIYAIIGMQVF) traverse the membrane as a helical segment. At 1630-1698 (GNIKLDEESH…NENERCGTDL (69 aa)) the chain is on the extracellular side. The helical transmembrane segment at 1699 to 1724 (AYVYFVSFIFFCSFLMLNLFVAVIMD) threads the bilayer. Over 1725 to 2313 (NFEYLTRDSS…LSDTEEDDKC (589 aa)) the chain is Cytoplasmic. Positions 1739 to 1774 (HHLDEFVRVWAEYDRAACGRIHYTEMYEMLTLMSPP) constitute an EF-hand domain. Positions 1752, 1758, and 1763 each coordinate Ca(2+). Disordered regions lie at residues 1970–2170 (VSEL…RPLL), 2206–2225 (CLTE…ASPQ), and 2263–2295 (SNTI…GPGM). Polar residues predominate over residues 2012–2023 (TDPSSMRRSFST). The segment covering 2055–2064 (HSSLRLSAHR) has biased composition (low complexity). Positions 2065 to 2085 (LNSDSGHKSDTHRSGGRERGR) are enriched in basic and acidic residues. A phosphoserine mark is found at Ser-2094 and Ser-2113. The segment covering 2101-2118 (NSEERGTQADWESPERRQ) has biased composition (basic and acidic residues). Positions 2129-2152 (TPNRQGTGSLSESSIPSVSDTSTP) are enriched in polar residues. Over residues 2210–2225 (SSNSPHPQQSQHASPQ) the composition is skewed to low complexity.

The protein belongs to the calcium channel alpha-1 subunit (TC 1.A.1.11) family. CACNA1E subfamily. In terms of assembly, interacts with EFHC1. Voltage-dependent calcium channels are multisubunit complexes, consisting of alpha-1, alpha-2, beta and delta subunits in a 1:1:1:1 ratio. The channel activity is directed by the pore-forming and voltage-sensitive alpha-1 subunit. In many cases, this subunit is sufficient to generate voltage-sensitive calcium channel activity. The auxiliary subunits beta and alpha-2/delta linked by a disulfide bridge regulate the channel activity. In terms of tissue distribution, expressed in neuronal tissues and in kidney.

It is found in the membrane. The enzyme catalyses Ca(2+)(in) = Ca(2+)(out). Its function is as follows. Voltage-sensitive calcium channels (VSCC) mediate the entry of calcium ions into excitable cells. They are also involved in a variety of calcium-dependent processes, including muscle contraction, hormone or neurotransmitter release, gene expression, cell motility, cell division and cell death. The isoform alpha-1E gives rise to R-type calcium currents. R-type calcium channels belong to the 'high-voltage activated' (HVA) group and are blocked by nickel. They are however insensitive to dihydropyridines (DHP). Calcium channels containing alpha-1E subunit could be involved in the modulation of firing patterns of neurons which is important for information processing. Functionally, voltage-sensitive calcium channels (VSCC) mediate the entry of calcium ions into excitable cells. They are also involved in a variety of calcium-dependent processes, including muscle contraction, hormone or neurotransmitter release, gene expression, cell motility, cell division and cell death. The isoform alpha-1E gives rise to R-type calcium currents. This Homo sapiens (Human) protein is Voltage-dependent R-type calcium channel subunit alpha-1E (CACNA1E).